The chain runs to 388 residues: Probable tRNA sulfurtransferase (388 aa).

One can recognise a THUMP domain in the interval 55–162; the sequence is VTLDDKLKKI…PEGVLIFTDR (108 aa). Residues 180–181, 205–206, R264, G286, and Q295 each bind ATP; these read LL and TF.

The protein belongs to the ThiI family.

It localises to the cytoplasm. It carries out the reaction [ThiI sulfur-carrier protein]-S-sulfanyl-L-cysteine + a uridine in tRNA + 2 reduced [2Fe-2S]-[ferredoxin] + ATP + H(+) = [ThiI sulfur-carrier protein]-L-cysteine + a 4-thiouridine in tRNA + 2 oxidized [2Fe-2S]-[ferredoxin] + AMP + diphosphate. The catalysed reaction is [ThiS sulfur-carrier protein]-C-terminal Gly-Gly-AMP + S-sulfanyl-L-cysteinyl-[cysteine desulfurase] + AH2 = [ThiS sulfur-carrier protein]-C-terminal-Gly-aminoethanethioate + L-cysteinyl-[cysteine desulfurase] + A + AMP + 2 H(+). It functions in the pathway cofactor biosynthesis; thiamine diphosphate biosynthesis. Catalyzes the ATP-dependent transfer of a sulfur to tRNA to produce 4-thiouridine in position 8 of tRNAs, which functions as a near-UV photosensor. Also catalyzes the transfer of sulfur to the sulfur carrier protein ThiS, forming ThiS-thiocarboxylate. This is a step in the synthesis of thiazole, in the thiamine biosynthesis pathway. The sulfur is donated as persulfide by IscS. The chain is Probable tRNA sulfurtransferase from Thermotoga maritima (strain ATCC 43589 / DSM 3109 / JCM 10099 / NBRC 100826 / MSB8).